A 365-amino-acid chain; its full sequence is MLGSRRLRSPALVLLLLRPLLASGDSASRLQTRAMNPGGGERGSPEDSHRLQRSTVPGSDPQRSNELLLLTSREGDSPEQRHHVLYFPGDVQNYHEIMTRHPENYQWENWSLENIATILARRFPNSYIWVIKCSRMHLHKFSCYDNFVKSNMFGAPEHTPDFGAFKHLYMLLVNAFNLTQNGMLFKNRSVWNKDCKASNCESNPSTSNGGQKENERTCEHVDEPSMSFPPLSLDGASFTLIGFSKGCVVLNQLLFELKEAKKDKNIDAFIKSIRTMYWLDGGHSGGSNTWVTYPEVLEEFAQTGITVHTHVTPYQVHDPMRSWIGKEHKKFVQILRDLGMQVTSQIHFAKETPSIENHFRVHEVF.

Residues 1–24 (MLGSRRLRSPALVLLLLRPLLASG) constitute a mitochondrion transit peptide. The segment at 28-64 (SRLQTRAMNPGGGERGSPEDSHRLQRSTVPGSDPQRS) is disordered. The span at 53–64 (RSTVPGSDPQRS) shows a compositional bias: polar residues.

Belongs to the C2orf69 family.

The protein resides in the mitochondrion matrix. In terms of biological role, may play a role in the respiratory chain. This chain is Mitochondrial protein C2orf69 homolog, found in Mus musculus (Mouse).